The sequence spans 435 residues: UDP-N-acetylmuramate--L-alanine ligase (435 aa).

ATP is bound at residue 108-114 (GAHGKST).

The protein belongs to the MurCDEF family.

It localises to the cytoplasm. The enzyme catalyses UDP-N-acetyl-alpha-D-muramate + L-alanine + ATP = UDP-N-acetyl-alpha-D-muramoyl-L-alanine + ADP + phosphate + H(+). Its pathway is cell wall biogenesis; peptidoglycan biosynthesis. Its function is as follows. Cell wall formation. The protein is UDP-N-acetylmuramate--L-alanine ligase of Campylobacter curvus (strain 525.92).